We begin with the raw amino-acid sequence, 2344 residues long: Genome polyprotein (2344 aa).

The SF3 helicase domain maps to 492–653 (QKVISDLHTM…ESWQATRHGS (162 aa)). 522 to 529 (GAPGIGKT) is an ATP binding site. The residue at position 1014 (tyrosine 1014) is an O-(5'-phospho-RNA)-tyrosine. Tyrosine 1014 carries the O-UMP-tyrosine; transient modification. The Peptidase C24 domain maps to 1109 to 1244 (GLPGFMRHNG…SKMCTLIDLT (136 aa)). Catalysis depends on for 3CLpro activity residues histidine 1135, aspartate 1152, and cysteine 1212. The RdRp catalytic domain occupies 1495–1619 (SDFLCLDYSK…AMTPMMVSLL (125 aa)). A disulfide bond links cysteine 1584 and cysteine 1591. The disordered stretch occupies residues 1771 to 1796 (RTAPQGEAAGTATTASVPGTTTDGMD). Residues 1778-1794 (AAGTATTASVPGTTTDG) are compositionally biased toward low complexity.

Homodimer. In terms of assembly, homomultimer. Interacts with host type II histo-blood group structures antigens at the surface of target cells. Mn(2+) serves as cofactor. Specific enzymatic cleavages by its own cysteine protease yield mature proteins. The protease cleaves itself from the nascent polyprotein autocatalytically. Precursor p41 can be cleaved by viral 3CLpro into protein p19 and VPg, or cleaved by host protease into protein p23/2 and protein p18. In terms of processing, VPg is uridylylated by the polymerase and is covalently attached to the 5'-end of the polyadenylated genomic and subgenomic RNAs. This uridylylated form acts as a nucleotide-peptide primer for the polymerase.

It is found in the host cytoplasm. The protein resides in the host endoplasmic reticulum. Its subcellular location is the virion. The catalysed reaction is a ribonucleoside 5'-triphosphate + H2O = a ribonucleoside 5'-diphosphate + phosphate + H(+). It catalyses the reaction Endopeptidase with a preference for cleavage when the P1 position is occupied by Glu-|-Xaa and the P1' position is occupied by Gly-|-Yaa.. It carries out the reaction RNA(n) + a ribonucleoside 5'-triphosphate = RNA(n+1) + diphosphate. Together with NTPase and NS4, initiates the formation of the replication complex. Induces the proliferation of the host smooth ER membranes forming long tubular structures. These remodeled membranes probably form the viral factories that contain the replication complex. In terms of biological role, displays NTPase activity, but no helicase activity. Induces the formation of convoluted membranes derived from the host ER. These remodeled membranes probably form the viral factories that contain the replication complex. Together with NS2 and NS4, initiates the formation of the replication complex. Functionally, probable key protein responsible for the formation of membrane alterations by the virus. Induces the formation of convoluted membranes derived from the host ER. These remodeled membranes probably form the viral factories that contain the replication complex. Together with NS2 and NTPase, initiates the formation of the replication complex. Its function is as follows. Viral genome-linked protein is covalently linked to the 5'-end of the positive-strand, negative-strand genomic RNAs and subgenomic RNA. Acts as a genome-linked replication primer. May recruit ribosome to viral RNA thereby promoting viral proteins translation. Interacts with host translation initiation complex to allow the translation of viral proteins. Processes the polyprotein. 3CLpro-RdRp is first released by autocleavage, then all other proteins are cleaved. May cleave polyadenylate-binding protein thereby inhibiting cellular translation. In terms of biological role, replicates genomic and antigenomic RNA by recognizing replications specific signals. Also transcribes a subgenomic mRNA by initiating RNA synthesis internally on antigenomic RNA. This sgRNA codes for structural proteins. Catalyzes the covalent attachment VPg with viral RNAs. Functionally, capsid protein VP60 self assembles to form an icosahedral capsid with a T=3 symmetry, about 35 nm in diameter, and consisting of 180 capsid proteins. A smaller form of capsid with a diameter of 23 nm might be capsid proteins assembled as icosahedron with T=1 symmetry. The capsid encapsulate VP2 proteins and genomic or subgenomic RNA. Attaches virion to target cells by binding histo-blood group antigens, inducing endocytosis of the viral particle. Acidification of the endosome induces conformational change of capsid protein thereby injecting virus genomic RNA into host cytoplasm. This chain is Genome polyprotein, found in Oryctolagus cuniculus (Rabbit).